We begin with the raw amino-acid sequence, 281 residues long: Acidic leucine-rich nuclear phosphoprotein 32-related protein (281 aa).

4 LRR repeats span residues 29–52 (YESLNELILDGKKLTSIKNEEKEL), 56–78 (FKNLERLCLNQTGIQTLENIPSI), 79–103 (ATLNVLELTDNHLSSVEVLKYIVQN), and 105–128 (PNIKTLEIGGNHFKNINDFETLKE). Residues 140-178 (NPFADNPNYRKELFEFLPNVKIIDCYNKEGMEVLSSDEE) form the LRRCT domain. Residues 197–244 (FKDEDDEDEEFVPNDNEDDDEDDELDDDLEDEDMEDLDKEDLDKEDYD) are compositionally biased toward acidic residues. Positions 197–281 (FKDEDDEDEE…DMDLKKTKLE (85 aa)) are disordered. Residues 245–266 (IDTKETEGVNKDEKSNKRKQDA) show a composition bias toward basic and acidic residues.

This sequence belongs to the ANP32 family.

The chain is Acidic leucine-rich nuclear phosphoprotein 32-related protein from Plasmodium falciparum (isolate 3D7).